The following is a 363-amino-acid chain: uncharacterized protein (363 aa).

7 helical membrane-spanning segments follow: residues 20–40 (WFFT…NTNI), 63–83 (INFA…FLVM), 101–121 (FPLI…GVQS), 141–161 (SVWQ…FTAF), 186–206 (FSLL…IMLA), 227–247 (IFKY…CVVL), and 268–288 (FLIV…WYVL). The tract at residues 329–363 (PRADLTPNDTLHMESKKKPLSQSPRVVIEEEDVAE) is disordered.

The protein localises to the membrane. This is an uncharacterized protein from Caenorhabditis elegans.